A 79-amino-acid chain; its full sequence is Tau-theraphotoxin-Hs1a (79 aa).

6 disulfide bridges follow: Cys-2–Cys-16, Cys-9–Cys-23, Cys-15–Cys-31, Cys-44–Cys-58, Cys-51–Cys-63, and Cys-57–Cys-71. 2 Domain repeats span residues 2 to 31 and 42 to 71; these read CAKE…IPHC and TNCA…IPYC. The tract at residues 2 to 71 is 2 X approximate repeats with cysteine pattern C-C-CC-C-C; sequence CAKEGEVCSW…DCPLAFIPYC (70 aa).

It belongs to the neurotoxin 23 family. Double-knot toxin subfamily. In terms of assembly, interacts with TRPV1 (2 toxins (4 moieties) bind 1 channel (homotetramer)). Expressed by the venom gland.

The protein resides in the secreted. Functionally, selectively activates the heat-activated TRPV1 channel. It binds to TRPV1 in an open state-dependent manner, trapping it there to produce irreversible currents. It binds to the outer edge of the external pore of TRPV1 in a counterclockwise configuration, using a limited protein-protein interface and inserting hydrophobic residues into the bilayer. It also partitions naturally into membranes, with the two lobes exhibiting opposing energetics for membrane partitioning (K1) and channel activation (K2). In addition, the toxin disrupts a cluster of hydrophobic residues behind the selectivity filter that are critical for channel activation. The sequence is that of Tau-theraphotoxin-Hs1a from Cyriopagopus schmidti (Chinese bird spider).